The sequence spans 249 residues: DNA polymerase sliding clamp (249 aa).

This sequence belongs to the PCNA family. Homotrimer. The subunits circularize to form a toroid; DNA passes through its center. Replication factor C (RFC) is required to load the toroid on the DNA.

Sliding clamp subunit that acts as a moving platform for DNA processing. Responsible for tethering the catalytic subunit of DNA polymerase and other proteins to DNA during high-speed replication. In Thermococcus gammatolerans (strain DSM 15229 / JCM 11827 / EJ3), this protein is DNA polymerase sliding clamp.